Reading from the N-terminus, the 93-residue chain is Alpha-conotoxin RVIIIA (93 aa).

A signal peptide spans Met-1–Ser-20. Positions Gln-21 to Arg-46 are excised as a propeptide. 4-carboxyglutamate is present on residues Glu-63 and Glu-68.

In terms of processing, contains 5 disulfide bonds. As to expression, expressed by the venom duct.

It localises to the secreted. Functionally, alpha-conotoxins act on postsynaptic membranes, they bind to the nicotinic acetylcholine receptors (nAChR) and thus inhibit them. This toxin provokes a nearly complete and slowly reversible inhibition of both the human adult (alpha-1-beta-1-epsilon-delta (CHRNA1-CHRNB1-CHRND-CHRNE)) and human fetal (alpha-1-beta-1-gamma-delta (CHRNA1-CHRNB1-CHRNG-CHRND)) neuromuscular nAChRs. It also reversibly blocks the neuromuscular alpha-7/CHRNA7 nAChR, the alpha-3-beta-2 (CHRNA3-CHRNB2) nAChR, the chimeric alpha-6 or -3/beta-3 or -2 (CHRNA6/CHRNA3-CHRNB2-CHRNB3) nAChR and with a low potency the alpha-4-beta-2 (CHRNA4-CHRNB2) nAChR. In addition, the toxin also inhibits the alpha-9-alpha-10 (CHRNA9-CHRNA10) nAChR with a high potency (IC(50)=187 nM). This chain is Alpha-conotoxin RVIIIA, found in Conus radiatus (Rayed cone).